The sequence spans 432 residues: Asparagine--tRNA ligase 2 (432 aa).

This sequence belongs to the class-II aminoacyl-tRNA synthetase family. As to quaternary structure, homodimer.

The protein resides in the cytoplasm. It catalyses the reaction tRNA(Asn) + L-asparagine + ATP = L-asparaginyl-tRNA(Asn) + AMP + diphosphate + H(+). The sequence is that of Asparagine--tRNA ligase 2 (asnS2) from Lactiplantibacillus plantarum (strain ATCC BAA-793 / NCIMB 8826 / WCFS1) (Lactobacillus plantarum).